The primary structure comprises 130 residues: Ornithine decarboxylase antizyme (130 aa).

Residues 1–14 (SDVPVHHRTDHDRA) are compositionally biased toward basic and acidic residues. The segment at 1 to 56 (SDVPVHHRTDHDRASLLTGSSRKSSVDSAGGSLFEASSRASSPSSSSSSECSDTES) is disordered. A compositionally biased stretch (polar residues) spans 17–27 (LTGSSRKSSVD). The span at 32–51 (SLFEASSRASSPSSSSSSEC) shows a compositional bias: low complexity.

Belongs to the ODC antizyme family. Interacts with ODC1 and thereby sterically blocks ODC homodimerization.

Ornithine decarboxylase (ODC) antizyme protein that negatively regulates ODC activity and intracellular polyamine biosynthesis and uptake in response to increased intracellular polyamine levels. Binds to ODC monomers, inhibiting the assembly of the functional ODC homodimer, and targets the monomers for ubiquitin-independent proteolytic destruction by the 26S proteasome. This chain is Ornithine decarboxylase antizyme (Oda), found in Drosophila virilis (Fruit fly).